The chain runs to 333 residues: Ketol-acid reductoisomerase (NADP(+)) (333 aa).

Residues 2-182 (AKLYYEKDCN…GGARAGVLKT (181 aa)) form the KARI N-terminal Rossmann domain. NADP(+) contacts are provided by residues 25 to 28 (YGSQ), S51, S53, and 83 to 86 (DEKQ). Residue H108 is part of the active site. G134 serves as a coordination point for NADP(+). Residues 183-328 (TFKEETETDL…KELRDMMSWS (146 aa)) form the KARI C-terminal knotted domain. Positions 191, 195, 227, and 231 each coordinate Mg(2+). Residue S252 participates in substrate binding.

This sequence belongs to the ketol-acid reductoisomerase family. Mg(2+) is required as a cofactor.

It carries out the reaction (2R)-2,3-dihydroxy-3-methylbutanoate + NADP(+) = (2S)-2-acetolactate + NADPH + H(+). It catalyses the reaction (2R,3R)-2,3-dihydroxy-3-methylpentanoate + NADP(+) = (S)-2-ethyl-2-hydroxy-3-oxobutanoate + NADPH + H(+). It functions in the pathway amino-acid biosynthesis; L-isoleucine biosynthesis; L-isoleucine from 2-oxobutanoate: step 2/4. It participates in amino-acid biosynthesis; L-valine biosynthesis; L-valine from pyruvate: step 2/4. Its function is as follows. Involved in the biosynthesis of branched-chain amino acids (BCAA). Catalyzes an alkyl-migration followed by a ketol-acid reduction of (S)-2-acetolactate (S2AL) to yield (R)-2,3-dihydroxy-isovalerate. In the isomerase reaction, S2AL is rearranged via a Mg-dependent methyl migration to produce 3-hydroxy-3-methyl-2-ketobutyrate (HMKB). In the reductase reaction, this 2-ketoacid undergoes a metal-dependent reduction by NADPH to yield (R)-2,3-dihydroxy-isovalerate. In Alkaliphilus metalliredigens (strain QYMF), this protein is Ketol-acid reductoisomerase (NADP(+)).